Reading from the N-terminus, the 235-residue chain is MKLVQEEYRKGPWTEQEDILLVNFVHLFGDRRWDFVAKVSGLNRTGKSCRLRWVNYLHPGLKRGKMTPQEERLVLELHAKWGNRWSKIARKLPGRTDNEIKNYWRTHMRKKAQEKKRPMSPTSSSSNCCSSSMTTTTSQDTGGSNGKMNQECEDGYYSMDDIWREIDQSGANVIKPVKDNYYSEQSCYLNFPPLASPTWESSLESIWNMDADESKMSSFAIDQFPLSFEHGSGRL.

HTH myb-type domains lie at 5–57 (QEEY…VNYL) and 58–112 (HPGL…RKKA). The segment at residues 33–57 (WDFVAKVSGLNRTGKSCRLRWVNYL) is a DNA-binding region (H-T-H motif). A Bipartite nuclear localization signal 1 motif is present at residues 62 to 65 (KRGK). Positions 85 to 108 (WSKIARKLPGRTDNEIKNYWRTHM) form a DNA-binding region, H-T-H motif. Positions 109–117 (RKKAQEKKR) match the Bipartite nuclear localization signal 2 motif. Residues 109–147 (RKKAQEKKRPMSPTSSSSNCCSSSMTTTTSQDTGGSNGK) are disordered. The segment covering 119–138 (MSPTSSSSNCCSSSMTTTTS) has biased composition (low complexity).

Mainly expressed in leaves and seedlings, and to a lower extent, in roots, stems and inflorescences. Isoform MYB59-1 and isoform MYB59-2 are present in roots, leaves, and seedlings, while the expression of isoform MYB59-3 and isoform MYB59-4 is confined to seedlings.

The protein resides in the nucleus. Its function is as follows. Transcription factor. This is Transcription factor MYB59 (MYB59) from Arabidopsis thaliana (Mouse-ear cress).